The sequence spans 424 residues: Elongator complex protein 4 (424 aa).

It belongs to the ELP4 family. As to quaternary structure, component of the elongator complex which consists of ELP1, ELP2, ELP3, ELP4, ELP5 and ELP6. Widely expressed.

Its subcellular location is the cytoplasm. It is found in the nucleus. The protein operates within tRNA modification; 5-methoxycarbonylmethyl-2-thiouridine-tRNA biosynthesis. Functionally, component of the elongator complex which is required for multiple tRNA modifications, including mcm5U (5-methoxycarbonylmethyl uridine), mcm5s2U (5-methoxycarbonylmethyl-2-thiouridine), and ncm5U (5-carbamoylmethyl uridine). The elongator complex catalyzes the formation of carboxymethyluridine in the wobble base at position 34 in tRNAs. The sequence is that of Elongator complex protein 4 (ELP4) from Homo sapiens (Human).